The following is a 270-amino-acid chain: MTPPSRTVLIVSDHTGLTAETTARALLAHFPSQSLKYLQRPFVASVEVARGVAREVAALAERGERPLIFTTITEPAVMRELEAAPARVFDLLGPGLIALEHEFGEKAARSVGRYHDMHDQTSYLARMDALDFALATDDGLGDRQYGLADVILVGVSRAGKTPTSLFLALQHSVRASNYPLAEDDFERESLPIPLEPHRAKLHGLTIDPRRLHAIRTQRKPGSRYASLEQCEYEVRQAERLFGRAGIPVRDTTSASVEEIAAGILAQLRRG.

154-161 (GVSRAGKT) lines the ADP pocket.

The protein belongs to the pyruvate, phosphate/water dikinase regulatory protein family. PSRP subfamily.

The enzyme catalyses [pyruvate, water dikinase] + ADP = [pyruvate, water dikinase]-phosphate + AMP + H(+). The catalysed reaction is [pyruvate, water dikinase]-phosphate + phosphate + H(+) = [pyruvate, water dikinase] + diphosphate. Bifunctional serine/threonine kinase and phosphorylase involved in the regulation of the phosphoenolpyruvate synthase (PEPS) by catalyzing its phosphorylation/dephosphorylation. This Deinococcus geothermalis (strain DSM 11300 / CIP 105573 / AG-3a) protein is Putative phosphoenolpyruvate synthase regulatory protein.